Here is a 317-residue protein sequence, read N- to C-terminus: L-lactate dehydrogenase (317 aa).

NAD(+) contacts are provided by residues Val16, Asp37, Arg42, Tyr67, and 81 to 82 (GA). Positions 84 and 90 each coordinate substrate. NAD(+) is bound by residues Ser103, 120-122 (AAN), and Ser145. 122–125 (NPVD) contacts substrate. 150–153 (DSAR) is a substrate binding site. The active-site Proton acceptor is the His177. Tyr221 carries the phosphotyrosine modification. Residue Thr230 coordinates substrate.

This sequence belongs to the LDH/MDH superfamily. LDH family. Homotetramer.

The protein localises to the cytoplasm. It carries out the reaction (S)-lactate + NAD(+) = pyruvate + NADH + H(+). Its pathway is fermentation; pyruvate fermentation to lactate; (S)-lactate from pyruvate: step 1/1. Functionally, catalyzes the conversion of lactate to pyruvate. This chain is L-lactate dehydrogenase, found in Limosilactobacillus fermentum (strain NBRC 3956 / LMG 18251) (Lactobacillus fermentum).